The chain runs to 324 residues: Glyoxylate/hydroxypyruvate reductase B (324 aa).

Catalysis depends on residues Arg-237 and Glu-266. His-285 acts as the Proton donor in catalysis.

The protein belongs to the D-isomer specific 2-hydroxyacid dehydrogenase family. GhrB subfamily. As to quaternary structure, homodimer.

The protein resides in the cytoplasm. It carries out the reaction glycolate + NADP(+) = glyoxylate + NADPH + H(+). It catalyses the reaction (R)-glycerate + NAD(+) = 3-hydroxypyruvate + NADH + H(+). The catalysed reaction is (R)-glycerate + NADP(+) = 3-hydroxypyruvate + NADPH + H(+). In terms of biological role, catalyzes the NADPH-dependent reduction of glyoxylate and hydroxypyruvate into glycolate and glycerate, respectively. The protein is Glyoxylate/hydroxypyruvate reductase B of Escherichia coli O9:H4 (strain HS).